Consider the following 345-residue polypeptide: uncharacterized protein (345 aa).

2 consecutive PDZ GRASP-type domains span residues 27–112 (CGFR…WASI) and 118–207 (AIWH…HGVL). Positions 27-223 (CGFRVLKVEN…LSGPPPQPGD (197 aa)) are GRASP. A disordered region spans residues 229 to 345 (PMLGGPDHKV…APQNEELVKN (117 aa)). A compositionally biased stretch (basic and acidic residues) spans 297–308 (KLSRELDHKTKD). 2 stretches are compositionally biased toward polar residues: residues 309–318 (ASSTNDSQTT) and 328–338 (VNSTNDESAPQ).

The protein resides in the golgi apparatus membrane. This is an uncharacterized protein from Schizosaccharomyces pombe (strain 972 / ATCC 24843) (Fission yeast).